A 529-amino-acid chain; its full sequence is Lysine--tRNA ligase (529 aa).

A 'HIGH' region motif is present at residues isoleucine 29–asparagine 37. The 'KMSKS' region signature appears at alanine 274 to serine 278. Lysine 277 contacts ATP.

This sequence belongs to the class-I aminoacyl-tRNA synthetase family.

The protein localises to the cytoplasm. The enzyme catalyses tRNA(Lys) + L-lysine + ATP = L-lysyl-tRNA(Lys) + AMP + diphosphate. This is Lysine--tRNA ligase from Methanosphaera stadtmanae (strain ATCC 43021 / DSM 3091 / JCM 11832 / MCB-3).